We begin with the raw amino-acid sequence, 875 residues long: Alanine--tRNA ligase (875 aa).

Zn(2+) contacts are provided by H563, H567, C665, and H669.

The protein belongs to the class-II aminoacyl-tRNA synthetase family. The cofactor is Zn(2+).

It localises to the cytoplasm. It catalyses the reaction tRNA(Ala) + L-alanine + ATP = L-alanyl-tRNA(Ala) + AMP + diphosphate. Functionally, catalyzes the attachment of alanine to tRNA(Ala) in a two-step reaction: alanine is first activated by ATP to form Ala-AMP and then transferred to the acceptor end of tRNA(Ala). Also edits incorrectly charged Ser-tRNA(Ala) and Gly-tRNA(Ala) via its editing domain. This is Alanine--tRNA ligase from Desulfitobacterium hafniense (strain Y51).